The following is a 927-amino-acid chain: MEVNGVSQSEAAPYVTKSSVKFRDNFWGSEDAGMDALMSRTKSSLSVLESIDEFYAKRASIEREYASKLQELAASSADIPEVGSTLNNILSMRTETGSMAKAHEEVSQQINTELRNKIREYIDQTEQQKVVAANAIEELYQKKTALEIDLSEKKDAYEYSCNKLNSYMRQTKKMTGRELDKYNLKIRQAALAVKKMDAEYRETNELLLTVTREWIDRWTEVCDAFQHIEEYRLEFLKTNMWAYANIISTACVKDDESCEKIRLTLENTNIDEDITQMIQNEGTGTTIPPLPEFNDYFKENGLNYDIDQLISKAPSYPYSSSRPSASASLASSPTRSAFRPKTSETVSSEVVSSPPTSPLHSPVKPVSNEQVEQVTEVELSIPVPSIQEAESQKPVLTGSSMRRPSVTSPTFEVAARPLTSMDVRSSHNAETEVQAIPAATDISPEVKEGKNSENAITKDNDDIILSSQLQPTATGSRSSRLSFSRHGHGSQTSLGSIKRKSIMERMGRPTSPFMGSSFSNMGSRSTSPTKEGFASNQHATGASVQSDELEDIDPRANVVLNVGPNMLSVGEAPVESTSKEEDKDVPDPIANAMAELSSSMRRRQSTSVDDEAPVSLSKTSSSTRLNGLGYHSRNTSIASDIDGVPKKSTLGAPPAAHTSAQMQRMSNSFASQTKQVFGEQRTENSARESLRHSRSNMSRSPSPMLSRRSSTLRPSFERSASSLSVRQSDVVSPAPSTRARGQSVSGQQRPSSSMSLYGEYNKSQPQLSMQRSVSPNPLGPNRRSSSVLQSQKSTSSNTSNRNNGGYSGSRPSSEMGHRYGSMSGRSMRQVSQRSTSRARSPEPTNRNSVQSKNVDPRATFTAEGEPILGYVIALYDYQAQIPEEISFQKGDTLMVLRTQEDGWWDGEIINVPNSKRGLFPSNFVQTV.

Residues 20–273 (VKFRDNFWGS…TLENTNIDED (254 aa)) enclose the F-BAR domain. A coiled-coil region spans residues 108-207 (QQINTELRNK…AEYRETNELL (100 aa)). Residues 321–354 (SRPSASASLASSPTRSAFRPKTSETVSSEVVSSP) are compositionally biased toward low complexity. Disordered stretches follow at residues 321 to 370 (SRPS…SNEQ), 390 to 409 (ESQKPVLTGSSMRRPSVTSP), 423 to 495 (VRSS…TSLG), 509 to 550 (PTSP…DELE), and 597 to 857 (SSSM…VDPR). Ser-331 and Ser-332 each carry phosphoserine. Residues 397 to 409 (TGSSMRRPSVTSP) are compositionally biased toward polar residues. The span at 444-461 (PEVKEGKNSENAITKDND) shows a compositional bias: basic and acidic residues. 3 stretches are compositionally biased toward polar residues: residues 465–482 (LSSQLQPTATGSRSSRLS), 513–546 (FMGSSFSNMGSRSTSPTKEGFASNQHATGASVQS), and 616–625 (LSKTSSSTRL). At Thr-529 the chain carries Phosphothreonine. Residues Ser-636 and Ser-639 each carry the phosphoserine modification. Residues 658-675 (TSAQMQRMSNSFASQTKQ) show a composition bias toward polar residues. The segment covering 680 to 691 (QRTENSARESLR) has biased composition (basic and acidic residues). Low complexity predominate over residues 695–714 (SNMSRSPSPMLSRRSSTLRP). Ser-700 carries the phosphoserine modification. 2 stretches are compositionally biased toward polar residues: residues 718-730 (RSASSLSVRQSDV) and 739-775 (ARGQSVSGQQRPSSSMSLYGEYNKSQPQLSMQRSVSP). Residue Ser-774 is modified to Phosphoserine. Over residues 784-813 (SSSVLQSQKSTSSNTSNRNNGGYSGSRPSS) the composition is skewed to low complexity. The segment covering 823–853 (SGRSMRQVSQRSTSRARSPEPTNRNSVQSKN) has biased composition (polar residues). Positions 866–927 (PILGYVIALY…LFPSNFVQTV (62 aa)) constitute an SH3 domain.

It localises to the cytoplasm. Its subcellular location is the cytoskeleton. In terms of biological role, after the onset of mitosis, forms a ring-like structure which colocalizes with the medial actin ring. Appears to mediate cytoskeletal rearrangements required for cytokinesis. Essential for viability. This chain is Cell division control protein 15 (cdc15), found in Schizosaccharomyces pombe (strain 972 / ATCC 24843) (Fission yeast).